Reading from the N-terminus, the 808-residue chain is Phospholipase D alpha 1 (808 aa).

In terms of domain architecture, C2 spans 1–125 (MAKTLLHGTL…LEGEEVDKWV (125 aa)). A Ca(2+)-binding site is contributed by D186. In terms of domain architecture, PLD phosphodiesterase 1 spans 326–364 (TIFTHHQKIVVVDSEMPTSGSENRRVVSFVGGIDLCDGR). Catalysis depends on residues H331, K333, and D338. H331 contributes to the a 1,2-diacyl-sn-glycero-3-phosphate binding site. Positions 370 and 404 each coordinate Ca(2+). The PLD phosphodiesterase 2 domain occupies 654–681 (FMIYVHAKMMIVDDEYIIIGSANINQRS). Catalysis depends on residues H659, K661, and D666. A 1,2-diacyl-sn-glycero-3-phosphate is bound at residue H659. E720 is a Ca(2+) binding site.

The protein belongs to the phospholipase D family. C2-PLD subfamily. Ca(2+) serves as cofactor.

It catalyses the reaction a 1,2-diacyl-sn-glycero-3-phosphocholine + H2O = a 1,2-diacyl-sn-glycero-3-phosphate + choline + H(+). Its function is as follows. Hydrolyzes glycerol-phospholipids at the terminal phosphodiesteric bond. Plays an important role in various cellular processes. The chain is Phospholipase D alpha 1 (PLD1) from Spuriopimpinella brachycarpa (Chamnamul).